The primary structure comprises 233 residues: RNA/RNP complex-1-interacting phosphatase homolog (233 aa).

Residues 1 to 14 show a composition bias toward basic residues; it reads MSNYHHNHNYQHRP. The disordered stretch occupies residues 1-21; it reads MSNYHHNHNYQHRPRGYERLP. The Tyrosine-protein phosphatase domain maps to 34–206; that stretch reads NVGRDIDGTR…LYEAERKKKY (173 aa). Cysteine 150 acts as the Phosphocysteine intermediate in catalysis. Position 151–156 (151–156) interacts with substrate; sequence THGLNR. Arginine 156 functions as the Proton donor/acceptor in the catalytic mechanism. The disordered stretch occupies residues 204-233; that stretch reads KKYGKSSGKSSGNSADSTISSEQLHRNNSQ. Residues 208 to 217 are compositionally biased toward low complexity; that stretch reads KSSGKSSGNS. Polar residues predominate over residues 218–233; the sequence is ADSTISSEQLHRNNSQ.

The protein belongs to the protein-tyrosine phosphatase family. Non-receptor class dual specificity subfamily. Interacts with the ERI/DICER complex component dcr-1. Interacts with ERI/DICER complex components rrf-3 and isoform b of eri-1. Interacts with drh-3 and rde-8.

The protein localises to the cytoplasm. It localises to the nucleus. Its function is as follows. RNA polyphosphatase which has RNA 5'-triphosphatase and diphosphatase activities. Displays poor protein-tyrosine phosphatase activity. Binds to 5'-triphosphorylated RNAs (also called ppp-RNAs). Dephosphorylates ppp-RNAs converting them to 5'-monophosphorylated RNAs (also called p-RNAs). During small-RNA-mediated gene-silencing or RNA interference (RNAi), involved in the dcr-1-mediated processing of an amplified dsRNA intermediate. This is most likely in association with several components of the ERI/DICER complex including dcr-1, eri-1 and rrf-3. Plays a role in the biogenesis of 26G small interfering RNAs (26G-siRNAs), which are a class of 26 nucleotide siRNAs that possess a guanine residue at the 5'-end, by dephosphorylating 5'-triphosphorylated 26G-siRNAs prior to their maturation by the ERI/DICER complex. Plays a role in the biogenesis of csr-1-bound 22G small interfering RNAs (22G-siRNAs), which are a class of 22 nucleotide siRNAs that possess a guanine residue at the 5'-end. Not required for the biogenesis of microRNAs (miRNA) or for the biogenesis of a class of 21 nucleotide PIWI-interacting RNAs (piRNAs) that possess a uracil residue at the 5'-end (also called 21U-RNAs). This is RNA/RNP complex-1-interacting phosphatase homolog from Caenorhabditis elegans.